Here is a 669-residue protein sequence, read N- to C-terminus: Zinc finger CCCH domain-containing protein 17 (669 aa).

Positions 1–11 (MFAPATQPQQQ) are enriched in low complexity. Residues 1 to 23 (MFAPATQPQQQHEQKKQSETVSS) form a disordered region. 3 C3H1-type zinc fingers span residues 34–58 (DCVY…HSEY), 60–86 (RMNP…HPPL), and 114–141 (AKQP…HTPN). 4 disordered regions span residues 150–175 (PVEA…EKKL), 285–306 (VEDR…PDFS), 376–589 (GMRL…VMEE), and 642–669 (EEGE…EMLS). Composition is skewed to basic and acidic residues over residues 164 to 175 (KPIENNTEEKKL), 285 to 299 (VEDR…RGNS), 392 to 406 (SMDR…DTPR), 420 to 464 (KLRE…EENH), 478 to 499 (RRRE…ESKP), and 547 to 579 (NNKD…PKAE). Acidic residues-rich tracts occupy residues 580–589 (VEEEGTVMEE) and 642–659 (EEGE…GEED). The span at 660–669 (IEKKTVEMLS) shows a compositional bias: basic and acidic residues.

This is Zinc finger CCCH domain-containing protein 17 from Arabidopsis thaliana (Mouse-ear cress).